We begin with the raw amino-acid sequence, 227 residues long: uncharacterized protein (227 aa).

This is an uncharacterized protein from Schizosaccharomyces pombe (strain 972 / ATCC 24843) (Fission yeast).